Consider the following 203-residue polypeptide: ATP phosphoribosyltransferase (203 aa).

The protein belongs to the ATP phosphoribosyltransferase family. Short subfamily.

Its subcellular location is the cytoplasm. The catalysed reaction is 1-(5-phospho-beta-D-ribosyl)-ATP + diphosphate = 5-phospho-alpha-D-ribose 1-diphosphate + ATP. Its pathway is amino-acid biosynthesis; L-histidine biosynthesis; L-histidine from 5-phospho-alpha-D-ribose 1-diphosphate: step 1/9. Functionally, catalyzes the condensation of ATP and 5-phosphoribose 1-diphosphate to form N'-(5'-phosphoribosyl)-ATP (PR-ATP). Has a crucial role in the pathway because the rate of histidine biosynthesis seems to be controlled primarily by regulation of HisG enzymatic activity. The protein is ATP phosphoribosyltransferase of Thermococcus kodakarensis (strain ATCC BAA-918 / JCM 12380 / KOD1) (Pyrococcus kodakaraensis (strain KOD1)).